The primary structure comprises 205 residues: MRLGRDFYNRDTLTVAKELLGKVLVRNINGVTLKGKIVETEAYIGAIDKASHAYGGKRTNRTETLYADPGTVYVYIIYGMYHCLNLISEEKDVAGGVLIRGIEPLEGIEEMSKLRYRKNYEELSSYEKKNFSNGPSKLCMALGIDKGENGINTISSEEIYVEDDSSIKEDFSIVEAKRIGIDYAEEARDFLWRFYIKDNKFVSKK.

Belongs to the DNA glycosylase MPG family.

The protein is Putative 3-methyladenine DNA glycosylase of Clostridium perfringens (strain SM101 / Type A).